The sequence spans 84 residues: Small ribosomal subunit protein bS18 (84 aa).

It belongs to the bacterial ribosomal protein bS18 family. In terms of assembly, part of the 30S ribosomal subunit. Forms a tight heterodimer with protein bS6.

Functionally, binds as a heterodimer with protein bS6 to the central domain of the 16S rRNA, where it helps stabilize the platform of the 30S subunit. This is Small ribosomal subunit protein bS18 from Ruthia magnifica subsp. Calyptogena magnifica.